We begin with the raw amino-acid sequence, 132 residues long: Small ribosomal subunit protein uS8 (132 aa).

The protein belongs to the universal ribosomal protein uS8 family. In terms of assembly, part of the 30S ribosomal subunit. Contacts proteins S5 and S12.

One of the primary rRNA binding proteins, it binds directly to 16S rRNA central domain where it helps coordinate assembly of the platform of the 30S subunit. This Bradyrhizobium sp. (strain ORS 278) protein is Small ribosomal subunit protein uS8.